The primary structure comprises 36 residues: Esculentin-2R (36 aa).

Cys30 and Cys36 are oxidised to a cystine.

As to expression, expressed by the skin glands.

The protein resides in the secreted. Antimicrobial peptide. The sequence is that of Esculentin-2R from Pelophylax ridibundus (Marsh frog).